Consider the following 875-residue polypeptide: Alanine--tRNA ligase (875 aa).

Zn(2+) contacts are provided by His564, His568, Cys666, and His670.

This sequence belongs to the class-II aminoacyl-tRNA synthetase family. Homotetramer. Requires Zn(2+) as cofactor.

Its subcellular location is the cytoplasm. The enzyme catalyses tRNA(Ala) + L-alanine + ATP = L-alanyl-tRNA(Ala) + AMP + diphosphate. Its function is as follows. Catalyzes the attachment of alanine to tRNA(Ala) in a two-step reaction: alanine is first activated by ATP to form Ala-AMP and then transferred to the acceptor end of tRNA(Ala). Also edits incorrectly charged Ser-tRNA(Ala) and Gly-tRNA(Ala) via its editing domain. The chain is Alanine--tRNA ligase from Sodalis glossinidius (strain morsitans).